Consider the following 275-residue polypeptide: NH(3)-dependent NAD(+) synthetase (275 aa).

50 to 57 (GISGGVDS) lines the ATP pocket. Residue D56 coordinates Mg(2+). Residue R147 coordinates deamido-NAD(+). An ATP-binding site is contributed by T167. E172 lines the Mg(2+) pocket. Residues K180 and D187 each contribute to the deamido-NAD(+) site. Positions 196 and 218 each coordinate ATP. A deamido-NAD(+)-binding site is contributed by 267–268 (HK).

It belongs to the NAD synthetase family. As to quaternary structure, homodimer.

It catalyses the reaction deamido-NAD(+) + NH4(+) + ATP = AMP + diphosphate + NAD(+) + H(+). The protein operates within cofactor biosynthesis; NAD(+) biosynthesis; NAD(+) from deamido-NAD(+) (ammonia route): step 1/1. Catalyzes the ATP-dependent amidation of deamido-NAD to form NAD. Uses ammonia as a nitrogen source. The polypeptide is NH(3)-dependent NAD(+) synthetase (Pseudomonas putida (strain ATCC 700007 / DSM 6899 / JCM 31910 / BCRC 17059 / LMG 24140 / F1)).